Here is a 147-residue protein sequence, read N- to C-terminus: Anti-sigma F factor (147 aa).

The protein belongs to the anti-sigma-factor family.

It catalyses the reaction L-seryl-[protein] + ATP = O-phospho-L-seryl-[protein] + ADP + H(+). The catalysed reaction is L-threonyl-[protein] + ATP = O-phospho-L-threonyl-[protein] + ADP + H(+). In terms of biological role, binds to sigma F and blocks its ability to form an RNA polymerase holoenzyme (E-sigma F). Phosphorylates SpoIIAA on a serine residue. This phosphorylation may enable SpoIIAA to act as an anti-anti-sigma factor that counteracts SpoIIAB and thus releases sigma F from inhibition. This Priestia megaterium (Bacillus megaterium) protein is Anti-sigma F factor.